A 381-amino-acid polypeptide reads, in one-letter code: GDP-mannose transporter (381 aa).

Residues 1-40 (MADDKKTNDYTVEMDKLDQGSKNFEAPLPPVQPRSAPNAQ) are Cytoplasmic-facing. Residues 41–61 (LANNPILPVLAYCGSSIMMTV) form a helical membrane-spanning segment. At 62–71 (MNKYVLSGTD) the chain is on the lumenal side. The chain crosses the membrane as a helical span at residues 72–92 (FNLNFLLLCVQSIVCIVAIQT). Residues 93-110 (CKASKLITYRDFNADEAK) lie on the Cytoplasmic side of the membrane. The chain crosses the membrane as a helical span at residues 111-127 (KWFPITLLLIGMIYTGS). Residues 128–134 (KALQFLS) lie on the Lumenal side of the membrane. A helical membrane pass occupies residues 135-151 (IPVYTIFKNLTIILIAY). Residues 152–160 (GEVLWFGGS) lie on the Cytoplasmic side of the membrane. Residues 161–182 (VTGLTLFSFGLMVLSSIIAAWA) form a helical membrane-spanning segment. Residues 183–200 (DIKHAVESSGDATAKVST) lie on the Lumenal side of the membrane. Residues 201 to 221 (LNAGYIWMLINCLCTSSYVLG) form a helical membrane-spanning segment. The Cytoplasmic portion of the chain corresponds to 222 to 233 (MRKRIKLTNFKD). A helical transmembrane segment spans residues 234 to 254 (FDTMFYNNLLSIPVLLVLTFL). Residues 255-274 (MEDWSSANITRNFPPADRNG) are Lumenal-facing. Asn-262 carries N-linked (GlcNAc...) asparagine glycosylation. A helical membrane pass occupies residues 275–295 (IMFAMILSGLSSVFISYTSAW). Topologically, residues 296-303 (CVRVTSST) are cytoplasmic. The helical transmembrane segment at 304-324 (TYSMVGALNKLPIAVSGLIFF) threads the bilayer. Residues 325 to 327 (DAP) are Lumenal-facing. A helical transmembrane segment spans residues 328–348 (VTFPSVSAIVVGFVSGIVYAV). Topologically, residues 349–381 (AKIKQNAKPKTGVLPTSNPVSASSQSMRDSLRS) are cytoplasmic. The segment at 362–381 (LPTSNPVSASSQSMRDSLRS) is disordered.

It belongs to the TPT transporter family. SLC35D subfamily. Homooligomer.

The protein localises to the golgi apparatus membrane. It is found in the cytoplasmic vesicle membrane. Its subcellular location is the endoplasmic reticulum membrane. Functionally, involved in the import of GDP-mannose from the cytoplasm into the Golgi lumen. This Aspergillus clavatus (strain ATCC 1007 / CBS 513.65 / DSM 816 / NCTC 3887 / NRRL 1 / QM 1276 / 107) protein is GDP-mannose transporter (gmt1).